A 71-amino-acid chain; its full sequence is MVVNRALLASVDALSRDEQIELVEHINGNLAEGMHISEANQALIEARANDTDDAHWSTIDDFDKRIRARLG.

Antitoxin component of a type II toxin-antitoxin (TA) system. The polypeptide is Antitoxin ParD2 (parD2) (Mycobacterium tuberculosis (strain CDC 1551 / Oshkosh)).